The sequence spans 304 residues: Ribonuclease HII (304 aa).

The tract at residues 1–53 (MIRDTKQPIKVPAKPASRSGGKAKTVKPKTVKPKAVKAADGKAASAKASTSKA) is disordered. Basic residues predominate over residues 24 to 35 (KTVKPKTVKPKA). Over residues 36 to 53 (VKAADGKAASAKASTSKA) the composition is skewed to low complexity. Residues 96 to 284 (WPIAGCDEAG…VAAAWQKIEG (189 aa)) form the RNase H type-2 domain. Residues D102, E103, and D193 each coordinate a divalent metal cation.

It belongs to the RNase HII family. Mn(2+) serves as cofactor. Mg(2+) is required as a cofactor.

It localises to the cytoplasm. The catalysed reaction is Endonucleolytic cleavage to 5'-phosphomonoester.. Functionally, endonuclease that specifically degrades the RNA of RNA-DNA hybrids. This chain is Ribonuclease HII, found in Rhodopseudomonas palustris (strain ATCC BAA-98 / CGA009).